A 131-amino-acid polypeptide reads, in one-letter code: NADPH-dependent 7-cyano-7-deazaguanine reductase (131 aa).

Cys41 serves as the catalytic Thioimide intermediate. Asp48 functions as the Proton donor in the catalytic mechanism. Residues 63 to 65 (VEL) and 82 to 83 (HE) each bind substrate.

It belongs to the GTP cyclohydrolase I family. QueF type 1 subfamily.

Its subcellular location is the cytoplasm. It catalyses the reaction 7-aminomethyl-7-carbaguanine + 2 NADP(+) = 7-cyano-7-deazaguanine + 2 NADPH + 3 H(+). Its pathway is tRNA modification; tRNA-queuosine biosynthesis. In terms of biological role, catalyzes the NADPH-dependent reduction of 7-cyano-7-deazaguanine (preQ0) to 7-aminomethyl-7-deazaguanine (preQ1). This Nitratiruptor sp. (strain SB155-2) protein is NADPH-dependent 7-cyano-7-deazaguanine reductase.